The sequence spans 393 residues: NAD(P)H-quinone oxidoreductase subunit H, chloroplastic (393 aa).

The protein belongs to the complex I 49 kDa subunit family. In terms of assembly, NDH is composed of at least 16 different subunits, 5 of which are encoded in the nucleus.

The protein localises to the plastid. The protein resides in the chloroplast thylakoid membrane. It catalyses the reaction a plastoquinone + NADH + (n+1) H(+)(in) = a plastoquinol + NAD(+) + n H(+)(out). The catalysed reaction is a plastoquinone + NADPH + (n+1) H(+)(in) = a plastoquinol + NADP(+) + n H(+)(out). In terms of biological role, NDH shuttles electrons from NAD(P)H:plastoquinone, via FMN and iron-sulfur (Fe-S) centers, to quinones in the photosynthetic chain and possibly in a chloroplast respiratory chain. The immediate electron acceptor for the enzyme in this species is believed to be plastoquinone. Couples the redox reaction to proton translocation, and thus conserves the redox energy in a proton gradient. The polypeptide is NAD(P)H-quinone oxidoreductase subunit H, chloroplastic (Nandina domestica (Heavenly bamboo)).